Consider the following 467-residue polypeptide: Putative vacuolar protein sorting-associated protein TDA6 (467 aa).

Residues 8–28 (ILLWFLIVDLSVIRALVLPPL) form a helical membrane-spanning segment. N-linked (GlcNAc...) asparagine glycosylation is found at N61, N124, and N141.

It belongs to the VPS62 family.

It is found in the membrane. Its function is as follows. Involved in vacuolar protein sorting. The sequence is that of Putative vacuolar protein sorting-associated protein TDA6 (TDA6) from Saccharomyces cerevisiae (strain ATCC 204508 / S288c) (Baker's yeast).